A 175-amino-acid chain; its full sequence is Shikimate kinase (175 aa).

14-19 (GAGKST) contributes to the ATP binding site. Ser-18 contacts Mg(2+). Substrate contacts are provided by Asp-36, Arg-60, and Gly-82. Arg-120 is an ATP binding site. Arg-140 contacts substrate. Gln-157 provides a ligand contact to ATP.

The protein belongs to the shikimate kinase family. As to quaternary structure, monomer. Mg(2+) serves as cofactor.

It localises to the cytoplasm. The enzyme catalyses shikimate + ATP = 3-phosphoshikimate + ADP + H(+). It participates in metabolic intermediate biosynthesis; chorismate biosynthesis; chorismate from D-erythrose 4-phosphate and phosphoenolpyruvate: step 5/7. Its function is as follows. Catalyzes the specific phosphorylation of the 3-hydroxyl group of shikimic acid using ATP as a cosubstrate. This chain is Shikimate kinase, found in Mannheimia succiniciproducens (strain KCTC 0769BP / MBEL55E).